The following is a 2256-amino-acid chain: GON-4-like protein (2256 aa).

Disordered stretches follow at residues 1-56, 105-213, and 227-266; these read MLPC…DSAG, PSLE…SLGP, and LFIP…MTYD. Residues 23-35 show a composition bias toward basic and acidic residues; the sequence is EDLHLEAAVKPDT. Polar residues predominate over residues 40–53; that stretch reads DCTSESLSWGQSHD. Over residues 141–176 the composition is skewed to basic and acidic residues; sequence TREDGGDHTVPEEPPSGEHAEEVKAEGGELEMHSEG. Residues 242-254 show a composition bias toward basic residues; it reads RKKTKKGTKRKRD. Ser346 is modified (phosphoserine). A compositionally biased stretch (acidic residues) spans 366-395; it reads EDDDSSDEEYQPDEEEEDETAEESLLESDV. Disordered regions lie at residues 366-428, 441-460, and 545-573; these read EDDD…VLSE, SAEV…QTRD, and DVEN…DTED. A compositionally biased stretch (acidic residues) spans 545–571; the sequence is DVENEDEADDDDDPEYNFLEDLDEPDT. Positions 609–1363 are required for interaction with YY1, SIN3A and HDAC1, and transcriptional repression activity; that stretch reads EMGFSNMEDD…DCMEEISSDF (755 aa). Position 783 is a phosphoserine (Ser783). Composition is skewed to low complexity over residues 947–959 and 1094–1115; these read TAGG…TETS and PWSE…LPSL. Disordered stretches follow at residues 947–969, 1078–1141, 1241–1288, and 1360–1620; these read TAGG…KTSP, AALP…SPCV, AEGK…EAVS, and SSDF…SRAR. The span at 1119-1135 shows a compositional bias: basic residues; sequence KFRKPYVRRKPTRRKGA. The segment covering 1364–1386 has biased composition (basic and acidic residues); that stretch reads PKQDIGEEVKEECCMELDRDSPQ. Composition is skewed to polar residues over residues 1387–1401 and 1429–1444; these read EKAS…QTAT and LPQS…TVLN. At Ser1445 the chain carries Phosphoserine. Residues 1475-1495 are compositionally biased toward acidic residues; that stretch reads GAEEEEEEDFDDLTQDEEDEL. Positions 1496-1510 are enriched in low complexity; the sequence is SSASEESVLSVPELQ. Residues 1529 to 1553 are compositionally biased toward acidic residues; that stretch reads GESEEENSQEENSEPEEEEEEEAEG. Residues 1606 to 1620 are compositionally biased toward basic residues; it reads RSSHRARSRRGSRAR. PAH domains are found at residues 1644-1716 and 1726-1797; these read EQKD…LLPE and EQQA…FDHL. 2 disordered regions span residues 1831–1886 and 1909–1966; these read VEEE…LKKS and LELV…APIP. Residues 1851-1868 show a composition bias toward basic and acidic residues; it reads EIGVQHQDKESEWPEAAK. Phosphoserine is present on residues Ser1921 and Ser1994. Disordered regions lie at residues 2050–2078 and 2110–2148; these read PETS…STRD and IRGT…VLPK. Over residues 2111-2129 the composition is skewed to low complexity; it reads RGTSSGASASEAAPTASRE. Residues 2163–2216 form the Myb-like domain; that stretch reads STGEKVVLWTREADRVILTMCQEQGAQPHTFSVISQQLGNKTPVEVSHRFRELM. The disordered stretch occupies residues 2223-2256; that stretch reads CEASSEDEDDATSTSNADQLSDHGDLLSEEELDE.

As to quaternary structure, found in a complex with YY1, SIN3A and HDAC1.

The protein resides in the nucleus. Functionally, has transcriptional repressor activity, probably as part of a complex with YY1, SIN3A and HDAC1. Required for B cell lymphopoiesis. This is GON-4-like protein (Gon4l) from Rattus norvegicus (Rat).